Here is a 240-residue protein sequence, read N- to C-terminus: Homeobox protein DLX-4 (240 aa).

The tract at residues glutamine 80–proline 120 is disordered. The span at histidine 88–proline 110 shows a compositional bias: basic and acidic residues. Residues leucine 117–leucine 176 constitute a DNA-binding region (homeobox).

Belongs to the distal-less homeobox family. As to expression, expressed in leukemia cells and placenta. Also expressed in kidney and fetal liver.

Its subcellular location is the nucleus. Its function is as follows. May play a role in determining the production of hemoglobin S. May act as a repressor. During embryonic development, plays a role in palatogenesis. This is Homeobox protein DLX-4 (DLX4) from Homo sapiens (Human).